Consider the following 338-residue polypeptide: GTPase Obg (338 aa).

In terms of domain architecture, Obg spans 1-159; that stretch reads MQFIDEVKIH…RWLRLELKLM (159 aa). Residues 66–91 are disordered; that stretch reads KAGRGKNGMGKDRHGANGDDLTIPVP. Residues 160–331 enclose the OBG-type G domain; it reads ADVGLLGFPN…LLDEIARHLW (172 aa). Residues 166 to 173, 191 to 195, 213 to 216, 283 to 286, and 312 to 314 each bind GTP; these read GFPNVGKS, FTTIK, DIPG, NKID, and SAA. Ser-173 and Thr-193 together coordinate Mg(2+).

The protein belongs to the TRAFAC class OBG-HflX-like GTPase superfamily. OBG GTPase family. Monomer. The cofactor is Mg(2+).

The protein localises to the cytoplasm. Its function is as follows. An essential GTPase which binds GTP, GDP and possibly (p)ppGpp with moderate affinity, with high nucleotide exchange rates and a fairly low GTP hydrolysis rate. Plays a role in control of the cell cycle, stress response, ribosome biogenesis and in those bacteria that undergo differentiation, in morphogenesis control. In Geobacter metallireducens (strain ATCC 53774 / DSM 7210 / GS-15), this protein is GTPase Obg.